A 488-amino-acid polypeptide reads, in one-letter code: Protein nucleotidyltransferase YdiU (488 aa).

Residues Gly91, Gly93, Arg94, Lys114, Asp126, Gly127, Arg177, and Arg184 each coordinate ATP. Residue Asp253 is the Proton acceptor of the active site. Mg(2+) is bound by residues Asn254 and Asp263. Residue Asp263 coordinates ATP.

This sequence belongs to the SELO family. Requires Mg(2+) as cofactor. Mn(2+) serves as cofactor.

It catalyses the reaction L-seryl-[protein] + ATP = 3-O-(5'-adenylyl)-L-seryl-[protein] + diphosphate. It carries out the reaction L-threonyl-[protein] + ATP = 3-O-(5'-adenylyl)-L-threonyl-[protein] + diphosphate. The catalysed reaction is L-tyrosyl-[protein] + ATP = O-(5'-adenylyl)-L-tyrosyl-[protein] + diphosphate. The enzyme catalyses L-histidyl-[protein] + UTP = N(tele)-(5'-uridylyl)-L-histidyl-[protein] + diphosphate. It catalyses the reaction L-seryl-[protein] + UTP = O-(5'-uridylyl)-L-seryl-[protein] + diphosphate. It carries out the reaction L-tyrosyl-[protein] + UTP = O-(5'-uridylyl)-L-tyrosyl-[protein] + diphosphate. Functionally, nucleotidyltransferase involved in the post-translational modification of proteins. It can catalyze the addition of adenosine monophosphate (AMP) or uridine monophosphate (UMP) to a protein, resulting in modifications known as AMPylation and UMPylation. This Bacillus thuringiensis (strain Al Hakam) protein is Protein nucleotidyltransferase YdiU.